Here is a 591-residue protein sequence, read N- to C-terminus: Protein kinase C zeta type (591 aa).

Residues 15–98 form the PB1 domain; the sequence is RVRLKAHYSG…DGLILHVFPS (84 aa). Positions 79–145 are interaction with SQSTM1; sequence AFRLAGQHRD…KRFNRRAYCG (67 aa). Residues 130 to 180 form a Phorbol-ester/DAG-type zinc finger; the sequence is GHLFQAKRFNRRAYCGQCSERIWGLARQGYRCINCKLLVHKRCHGLVPLTC. Residues 251-517 form the Protein kinase domain; sequence FDLIRVIGRG…FSDIKSHAFF (267 aa). ATP is bound by residues 257–265 and K280; that span reads IGRGSYAKV. Residue D375 is the Proton acceptor of the active site. At T409 the chain carries Phosphothreonine; by PDPK1 and PI3K. The 72-residue stretch at 518–589 folds into the AGC-kinase C-terminal domain; that stretch reads RSIDWDLLEK…INPLLLSTEE (72 aa). T559 carries the phosphothreonine modification. The residue at position 590 (S590) is a Phosphoserine.

The protein belongs to the protein kinase superfamily. AGC Ser/Thr protein kinase family. PKC subfamily. In terms of assembly, interacts with PARD6A, PARD6B and PARD6G. Part of a complex with PARD3, PARD6A or PARD6B or PARD6G and CDC42 or RAC1. Interacts with ADAP1/CENTA1. Interacts directly with SQSTM1. Forms a ternary complex with SQSTM1 and KCNAB2. Forms another ternary complex with SQSTM1 and GABRR3. Forms a complex with SQSTM1 and MAP2K5. Interacts (via the protein kinase domain) with WWC1. Forms a tripartite complex with WWC1 and DDR1, but predominantly in the absence of collagen. Component of the Par polarity complex, composed of at least phosphorylated PRKCZ, PARD3 and TIAM1. Interacts with PDPK1 (via N-terminal region). Interacts with WDFY2 (via WD repeats 1-3). Interacts with VAMP2. Forms a complex with WDFY2 and VAMP2. Interacts with APPL1. Interacts with WWC1, WWC2 and WWC3. CDH5 is required for its phosphorylation at Thr-409. Phosphorylated by protein kinase PDPK1; phosphorylation is inhibited by the apoptotic C-terminal cleavage product of PKN2. Phosphorylation at Thr-409 by PI3K activates the kinase.

It is found in the cytoplasm. The protein localises to the endosome. It localises to the cell junction. Its subcellular location is the membrane. The enzyme catalyses L-seryl-[protein] + ATP = O-phospho-L-seryl-[protein] + ADP + H(+). It catalyses the reaction L-threonyl-[protein] + ATP = O-phospho-L-threonyl-[protein] + ADP + H(+). Atypical PKCs (PRKCI and PRKCZ) exhibit an elevated basal enzymatic activity (that may be due to the interaction with SMG1 or SQSTM1) and are not regulated by diacylglycerol, phosphatidylserine, phorbol esters or calcium ions. Two specific sites, Thr-409 (activation loop of the kinase domain) and Thr-559 (turn motif), need to be phosphorylated for its full activation. Phosphatidylinositol 3,4,5-trisphosphate might be a physiological activator. Functionally, calcium- and diacylglycerol-independent serine/threonine-protein kinase that functions in phosphatidylinositol 3-kinase (PI3K) pathway and mitogen-activated protein (MAP) kinase cascade, and is involved in NF-kappa-B activation, mitogenic signaling, cell proliferation, cell polarity, inflammatory response and maintenance of long-term potentiation (LTP). Upon lipopolysaccharide (LPS) treatment in macrophages, or following mitogenic stimuli, functions downstream of PI3K to activate MAP2K1/MEK1-MAPK1/ERK2 signaling cascade independently of RAF1 activation. Required for insulin-dependent activation of AKT3, but may function as an adapter rather than a direct activator. Upon insulin treatment may act as a downstream effector of PI3K and contribute to the activation of translocation of the glucose transporter SLC2A4/GLUT4 and subsequent glucose transport in adipocytes. In EGF-induced cells, binds and activates MAP2K5/MEK5-MAPK7/ERK5 independently of its kinase activity and can activate JUN promoter through MEF2C. Through binding with SQSTM1/p62, functions in interleukin-1 signaling and activation of NF-kappa-B with the specific adapters RIPK1 and TRAF6. Participates in TNF-dependent transactivation of NF-kappa-B by phosphorylating and activating IKBKB kinase, which in turn leads to the degradation of NF-kappa-B inhibitors. In migrating astrocytes, forms a cytoplasmic complex with PARD6A and is recruited by CDC42 to function in the establishment of cell polarity along with the microtubule motor and dynein. In association with FEZ1, stimulates neuronal differentiation in PC12 cells. In the inflammatory response, is required for the T-helper 2 (Th2) differentiation process, including interleukin production, efficient activation of JAK1 and the subsequent phosphorylation and nuclear translocation of STAT6. May be involved in development of allergic airway inflammation (asthma), a process dependent on Th2 immune response. In the NF-kappa-B-mediated inflammatory response, can relieve SETD6-dependent repression of NF-kappa-B target genes by phosphorylating the RELA subunit at 'Ser-311'. Phosphorylates VAMP2 in vitro. Phosphorylates and activates LRRK1, which phosphorylates RAB proteins involved in intracellular trafficking. This chain is Protein kinase C zeta type (PRKCZ), found in Oryctolagus cuniculus (Rabbit).